The sequence spans 204 residues: High frequency lysogenization protein HflD homolog (204 aa).

It belongs to the HflD family.

It localises to the cytoplasm. The protein resides in the cell inner membrane. The polypeptide is High frequency lysogenization protein HflD homolog (Xanthomonas campestris pv. campestris (strain ATCC 33913 / DSM 3586 / NCPPB 528 / LMG 568 / P 25)).